The following is a 262-amino-acid chain: Thrombin-like enzyme gyroxin B1.3 (262 aa).

The signal sequence occupies residues 1–18 (MVLIRVLANLLILQLSYA). Residues 19–262 (QKSSELVIGG…AGSETVNCPS (244 aa)) constitute a propeptide that is removed on maturation. Residues 25 to 253 (VIGGDECNIN…HLDWIQNIIA (229 aa)) enclose the Peptidase S1 domain. 6 disulfides stabilise this stretch: Cys31–Cys165, Cys52–Cys68, Cys102–Cys260, Cys144–Cys214, Cys176–Cys193, and Cys204–Cys229. Catalysis depends on His67, which acts as the Charge relay system. The N-linked (GlcNAc...) asparagine glycan is linked to Asn105. The active-site Charge relay system is the Asp112. The Charge relay system role is filled by Ser208.

It belongs to the peptidase S1 family. Snake venom subfamily. Monomer. In terms of tissue distribution, expressed by the venom gland.

It localises to the secreted. Functionally, thrombin-like snake venom serine protease. Displays a specificity similar to trypsin. Releases only fibrinopeptide A in the conversion of fibrinogen to fibrin. Reversibly increases the permeability of the blood brain barrier (BBB) in mice. Induces the barrel rotation syndrome in mice, which is manifested by gyroxin-like, rapid rolling motions. This syndrome may be due to its effect on BBB permeability, and certainly also to other actions affecting endogenous substrates present in the endothelium, nervous tissues or blood. Also shows a moderate inhibitory activity on the human voltage-gated potassium channel Kv10.1/KCNH1/EAG1 (58% current inhibition at 5 uM). It blocks Kv10.1/KCNH1/EAG1 in a time and dose-dependent manner and with a mechanism independent of its enzymatic activity. It may have a preference in interacting with Kv10.1/KCNH1/EAG1 in its closed state, since the inhibitory effect of the toxin is decreased at more depolarized potentials. The polypeptide is Thrombin-like enzyme gyroxin B1.3 (Crotalus durissus terrificus (South American rattlesnake)).